We begin with the raw amino-acid sequence, 76 residues long: Sec-independent protein translocase protein TatA (76 aa).

The helical transmembrane segment at 1 to 21 (MGGLSIWHWLIVLLIVALVFG) threads the bilayer. Residues 40–76 (KDGMKEGETPADAQQLPRSGAVDVNAKETTRSDSNKA) are disordered. Basic and acidic residues predominate over residues 64 to 76 (NAKETTRSDSNKA).

This sequence belongs to the TatA/E family. As to quaternary structure, the Tat system comprises two distinct complexes: a TatABC complex, containing multiple copies of TatA, TatB and TatC subunits, and a separate TatA complex, containing only TatA subunits. Substrates initially bind to the TatABC complex, which probably triggers association of the separate TatA complex to form the active translocon.

The protein resides in the cell inner membrane. In terms of biological role, part of the twin-arginine translocation (Tat) system that transports large folded proteins containing a characteristic twin-arginine motif in their signal peptide across membranes. TatA could form the protein-conducting channel of the Tat system. The sequence is that of Sec-independent protein translocase protein TatA from Burkholderia cenocepacia (strain HI2424).